The following is a 143-amino-acid chain: Large ribosomal subunit protein uL13 (143 aa).

The protein belongs to the universal ribosomal protein uL13 family. Part of the 50S ribosomal subunit.

Functionally, this protein is one of the early assembly proteins of the 50S ribosomal subunit, although it is not seen to bind rRNA by itself. It is important during the early stages of 50S assembly. This chain is Large ribosomal subunit protein uL13, found in Dehalococcoides mccartyi (strain ATCC BAA-2266 / KCTC 15142 / 195) (Dehalococcoides ethenogenes (strain 195)).